A 336-amino-acid polypeptide reads, in one-letter code: Holliday junction branch migration complex subunit RuvB (336 aa).

Residues 4–184 form a large ATPase domain (RuvB-L) region; sequence ADRLVAPGSI…FGIVQRLEFY (181 aa). Residues Ile23, Arg24, Gly65, Lys68, Thr69, Thr70, 131 to 133, Arg174, Tyr184, and Arg221 contribute to the ATP site; that span reads EDY. Mg(2+) is bound at residue Thr69. A small ATPAse domain (RuvB-S) region spans residues 185–255; the sequence is QVADLQHIVS…VASQALDMLN (71 aa). The tract at residues 258-336 is head domain (RuvB-H); sequence AEGFDYMDRK…HFGITPPQMP (79 aa). The DNA site is built by Arg294, Arg313, and Arg318.

Belongs to the RuvB family. In terms of assembly, homohexamer. Forms an RuvA(8)-RuvB(12)-Holliday junction (HJ) complex. HJ DNA is sandwiched between 2 RuvA tetramers; dsDNA enters through RuvA and exits via RuvB. An RuvB hexamer assembles on each DNA strand where it exits the tetramer. Each RuvB hexamer is contacted by two RuvA subunits (via domain III) on 2 adjacent RuvB subunits; this complex drives branch migration. In the full resolvosome a probable DNA-RuvA(4)-RuvB(12)-RuvC(2) complex forms which resolves the HJ.

Its subcellular location is the cytoplasm. The catalysed reaction is ATP + H2O = ADP + phosphate + H(+). Functionally, the RuvA-RuvB-RuvC complex processes Holliday junction (HJ) DNA during genetic recombination and DNA repair, while the RuvA-RuvB complex plays an important role in the rescue of blocked DNA replication forks via replication fork reversal (RFR). RuvA specifically binds to HJ cruciform DNA, conferring on it an open structure. The RuvB hexamer acts as an ATP-dependent pump, pulling dsDNA into and through the RuvAB complex. RuvB forms 2 homohexamers on either side of HJ DNA bound by 1 or 2 RuvA tetramers; 4 subunits per hexamer contact DNA at a time. Coordinated motions by a converter formed by DNA-disengaged RuvB subunits stimulates ATP hydrolysis and nucleotide exchange. Immobilization of the converter enables RuvB to convert the ATP-contained energy into a lever motion, pulling 2 nucleotides of DNA out of the RuvA tetramer per ATP hydrolyzed, thus driving DNA branch migration. The RuvB motors rotate together with the DNA substrate, which together with the progressing nucleotide cycle form the mechanistic basis for DNA recombination by continuous HJ branch migration. Branch migration allows RuvC to scan DNA until it finds its consensus sequence, where it cleaves and resolves cruciform DNA. This Cronobacter sakazakii (strain ATCC BAA-894) (Enterobacter sakazakii) protein is Holliday junction branch migration complex subunit RuvB.